Reading from the N-terminus, the 187-residue chain is Ribosome maturation factor RimM (187 aa).

The span at 1 to 17 (MTSTPSPSTADPNSTND) shows a compositional bias: polar residues. Residues 1–21 (MTSTPSPSTADPNSTNDWLPV) are disordered. The 74-residue stretch at 111-184 (EGEFHLLDLV…WLLLTPPPGL (74 aa)) folds into the PRC barrel domain.

The protein belongs to the RimM family. In terms of assembly, binds ribosomal protein uS19.

It localises to the cytoplasm. Functionally, an accessory protein needed during the final step in the assembly of 30S ribosomal subunit, possibly for assembly of the head region. Essential for efficient processing of 16S rRNA. May be needed both before and after RbfA during the maturation of 16S rRNA. It has affinity for free ribosomal 30S subunits but not for 70S ribosomes. The polypeptide is Ribosome maturation factor RimM (Synechococcus sp. (strain CC9311)).